Reading from the N-terminus, the 337-residue chain is Anthranilate phosphoribosyltransferase (337 aa).

5-phospho-alpha-D-ribose 1-diphosphate-binding positions include Gly82, 85–86, Thr90, 92–95, 110–118, and Thr122; these read GD, NIST, and KHGNRAMSS. Gly82 contributes to the anthranilate binding site. Position 94 (Ser94) interacts with Mg(2+). An anthranilate-binding site is contributed by Asn113. Anthranilate is bound at residue Arg168. Residues Asp226 and Glu227 each coordinate Mg(2+).

This sequence belongs to the anthranilate phosphoribosyltransferase family. As to quaternary structure, homodimer. It depends on Mg(2+) as a cofactor.

The catalysed reaction is N-(5-phospho-beta-D-ribosyl)anthranilate + diphosphate = 5-phospho-alpha-D-ribose 1-diphosphate + anthranilate. Its pathway is amino-acid biosynthesis; L-tryptophan biosynthesis; L-tryptophan from chorismate: step 2/5. Its function is as follows. Catalyzes the transfer of the phosphoribosyl group of 5-phosphorylribose-1-pyrophosphate (PRPP) to anthranilate to yield N-(5'-phosphoribosyl)-anthranilate (PRA). The polypeptide is Anthranilate phosphoribosyltransferase (Phenylobacterium zucineum (strain HLK1)).